The primary structure comprises 458 residues: Histidine--tRNA ligase (458 aa).

This sequence belongs to the class-II aminoacyl-tRNA synthetase family. As to quaternary structure, homodimer.

The protein localises to the cytoplasm. The enzyme catalyses tRNA(His) + L-histidine + ATP = L-histidyl-tRNA(His) + AMP + diphosphate + H(+). This is Histidine--tRNA ligase from Micrococcus luteus (strain ATCC 4698 / DSM 20030 / JCM 1464 / CCM 169 / CCUG 5858 / IAM 1056 / NBRC 3333 / NCIMB 9278 / NCTC 2665 / VKM Ac-2230) (Micrococcus lysodeikticus).